We begin with the raw amino-acid sequence, 134 residues long: Urease subunit beta (134 aa).

Belongs to the urease beta subunit family. Heterotrimer of UreA (gamma), UreB (beta) and UreC (alpha) subunits. Three heterotrimers associate to form the active enzyme.

Its subcellular location is the cytoplasm. The enzyme catalyses urea + 2 H2O + H(+) = hydrogencarbonate + 2 NH4(+). It functions in the pathway nitrogen metabolism; urea degradation; CO(2) and NH(3) from urea (urease route): step 1/1. This chain is Urease subunit beta, found in Staphylococcus saprophyticus subsp. saprophyticus (strain ATCC 15305 / DSM 20229 / NCIMB 8711 / NCTC 7292 / S-41).